The primary structure comprises 625 residues: Probable potassium transport system protein Kup 2 (625 aa).

12 helical membrane-spanning segments follow: residues 15 to 35, 52 to 72, 98 to 118, 134 to 154, 164 to 184, 203 to 223, 246 to 266, 284 to 304, 336 to 356, 365 to 385, 394 to 414, and 417 to 437; these read LSFA…LYAF, ILSL…LVIV, GGWL…DGIL, LSPN…FFLF, IGIY…VLGF, IYFF…VFLV, WFAV…AFVL, FLPV…QAII, VYLP…VVIF, AYGI…GIIA, FKVM…AGNI, and LLTG…VMYT.

It belongs to the HAK/KUP transporter (TC 2.A.72) family.

Its subcellular location is the cell inner membrane. It carries out the reaction K(+)(in) + H(+)(in) = K(+)(out) + H(+)(out). Functionally, transport of potassium into the cell. Likely operates as a K(+):H(+) symporter. The polypeptide is Probable potassium transport system protein Kup 2 (Legionella pneumophila subsp. pneumophila (strain Philadelphia 1 / ATCC 33152 / DSM 7513)).